Here is a 112-residue protein sequence, read N- to C-terminus: Protein Tat (112 aa).

The interval 1-24 is interaction with human CREBBP; it reads MDPVDPEMPPWHHPGSKPQTPCNN. The segment at 1 to 48 is transactivation; that stretch reads MDPVDPEMPPWHHPGSKPQTPCNNCYCKRCCYHCYVCFTKKGLGISHG. Cysteine 22, cysteine 25, and cysteine 27 together coordinate Zn(2+). The segment at 22–37 is cysteine-rich; the sequence is CNNCYCKRCCYHCYVC. An N6-acetyllysine; by host PCAF modification is found at lysine 28. Zn(2+) is bound by residues cysteine 30, histidine 33, cysteine 34, and cysteine 37. Residues 38–48 form a core region; the sequence is FTKKGLGISHG. The segment at 45–112 is disordered; it reads ISHGRKKRRR…CNSCTRISGQ (68 aa). Residues 49–56 carry the Nuclear localization signal, RNA-binding (TAR), and protein transduction motif; sequence RKKRRRPA. An interaction with the host capping enzyme RNGTT region spans residues 49-82; it reads RKKRRRPAAAASYPDNKDPVPEQHTGRKQKRQEE. An N6-acetyllysine; by host EP300 and GCN5L2 mark is found at lysine 50 and lysine 51. An asymmetric dimethylarginine; by host PRMT6 mark is found at arginine 52 and arginine 53. Residues 63 to 91 show a composition bias toward basic and acidic residues; that stretch reads DNKDPVPEQHTGRKQKRQEEQEKKVEKET. Residues 93–112 are compositionally biased toward polar residues; that stretch reads PSGQPCHQDSCNSCTRISGQ.

Belongs to the lentiviruses Tat family. As to quaternary structure, interacts with host CCNT1. Associates with the P-TEFb complex composed at least of Tat, P-TEFb (CDK9 and CCNT1), TAR RNA, RNA Pol II. Recruits the HATs CREBBP, TAF1/TFIID, EP300, PCAF and GCN5L2. Interacts with host KAT5/Tip60; this interaction targets the latter to degradation. Interacts with the host deacetylase SIRT1. Interacts with host capping enzyme RNGTT; this interaction stimulates RNGTT. Binds to host KDR, and to the host integrins ITGAV/ITGB3 and ITGA5/ITGB1. Interacts with host KPNB1/importin beta-1 without previous binding to KPNA1/importin alpha-1. Interacts with EIF2AK2. Interacts with host nucleosome assembly protein NAP1L1; this interaction may be required for the transport of Tat within the nucleus, since the two proteins interact at the nuclear rim. Interacts with host C1QBP/SF2P32; this interaction involves lysine-acetylated Tat. Interacts with the host chemokine receptors CCR2, CCR3 and CXCR4. Interacts with host DPP4/CD26; this interaction may trigger an anti-proliferative effect. Interacts with host LDLR. Interacts with the host extracellular matrix metalloproteinase MMP1. Interacts with host PRMT6; this interaction mediates Tat's methylation. Interacts with, and is ubiquitinated by MDM2/Hdm2. Interacts with host PSMC3 and HTATIP2. Interacts with STAB1; this interaction may overcome SATB1-mediated repression of IL2 and IL2RA (interleukin) in T cells by binding to the same domain than HDAC1. Interacts (when acetylated) with human CDK13, thereby increasing HIV-1 mRNA splicing and promoting the production of the doubly spliced HIV-1 protein Nef. Interacts with host TBP; this interaction modulates the activity of transcriptional pre-initiation complex. Interacts with host RELA. Interacts with host PLSCR1; this interaction negatively regulates Tat transactivation activity by altering its subcellular distribution. In terms of processing, asymmetrical arginine methylation by host PRMT6 seems to diminish the transactivation capacity of Tat and affects the interaction with host CCNT1. Acetylation by EP300, CREBBP, GCN5L2/GCN5 and PCAF regulates the transactivation activity of Tat. EP300-mediated acetylation of Lys-50 promotes dissociation of Tat from the TAR RNA through the competitive binding to PCAF's bromodomain. In addition, the non-acetylated Tat's N-terminus can also interact with PCAF. PCAF-mediated acetylation of Lys-28 enhances Tat's binding to CCNT1. Lys-50 is deacetylated by SIRT1. Post-translationally, polyubiquitination by host MDM2 does not target Tat to degradation, but activates its transactivation function and fosters interaction with CCNT1 and TAR RNA. In terms of processing, phosphorylated by EIF2AK2 on serine and threonine residues adjacent to the basic region important for TAR RNA binding and function. Phosphorylation of Tat by EIF2AK2 is dependent on the prior activation of EIF2AK2 by dsRNA.

The protein localises to the host nucleus. Its subcellular location is the host nucleolus. It is found in the host cytoplasm. It localises to the secreted. In terms of biological role, transcriptional activator that increases RNA Pol II processivity, thereby increasing the level of full-length viral transcripts. Recognizes a hairpin structure at the 5'-LTR of the nascent viral mRNAs referred to as the transactivation responsive RNA element (TAR) and recruits the cyclin T1-CDK9 complex (P-TEFb complex) that will in turn hyperphosphorylate the RNA polymerase II to allow efficient elongation. The CDK9 component of P-TEFb and other Tat-activated kinases hyperphosphorylate the C-terminus of RNA Pol II that becomes stabilized and much more processive. Other factors such as HTATSF1/Tat-SF1, SUPT5H/SPT5, and HTATIP2 are also important for Tat's function. Besides its effect on RNA Pol II processivity, Tat induces chromatin remodeling of proviral genes by recruiting the histone acetyltransferases (HATs) CREBBP, EP300 and PCAF to the chromatin. This also contributes to the increase in proviral transcription rate, especially when the provirus integrates in transcriptionally silent region of the host genome. To ensure maximal activation of the LTR, Tat mediates nuclear translocation of NF-kappa-B by interacting with host RELA. Through its interaction with host TBP, Tat may also modulate transcription initiation. Tat can reactivate a latently infected cell by penetrating in it and transactivating its LTR promoter. In the cytoplasm, Tat is thought to act as a translational activator of HIV-1 mRNAs. Its function is as follows. Extracellular circulating Tat can be endocytosed by surrounding uninfected cells via the binding to several surface receptors such as CD26, CXCR4, heparan sulfate proteoglycans (HSPG) or LDLR. Neurons are rarely infected, but they internalize Tat via their LDLR. Through its interaction with nuclear HATs, Tat is potentially able to control the acetylation-dependent cellular gene expression. Modulates the expression of many cellular genes involved in cell survival, proliferation or in coding for cytokines or cytokine receptors. Tat plays a role in T-cell and neurons apoptosis. Tat induced neurotoxicity and apoptosis probably contribute to neuroAIDS. Circulating Tat also acts as a chemokine-like and/or growth factor-like molecule that binds to specific receptors on the surface of the cells, affecting many cellular pathways. In the vascular system, Tat binds to ITGAV/ITGB3 and ITGA5/ITGB1 integrins dimers at the surface of endothelial cells and competes with bFGF for heparin-binding sites, leading to an excess of soluble bFGF. The polypeptide is Protein Tat (Homo sapiens (Human)).